The primary structure comprises 222 residues: Large ribosomal subunit protein uL11c (222 aa).

The disordered stretch occupies residues 1-20 (MASSSLSTLCSSTSSSLHPN). A chloroplast-targeting transit peptide spans 1–62 (MASSSLSTLC…TPRFLTVIAM (62 aa)).

The protein belongs to the universal ribosomal protein uL11 family. In terms of assembly, part of the ribosomal stalk of the 50S ribosomal subunit. Interacts with L10 and the large rRNA to form the base of the stalk. L10 forms an elongated spine to which L12 dimers bind in a sequential fashion forming a multimeric L10(L12)X complex.

It localises to the plastid. It is found in the chloroplast. Its function is as follows. Forms part of the ribosomal stalk which helps the ribosome interact with GTP-bound translation factors. The protein is Large ribosomal subunit protein uL11c (RPL11) of Arabidopsis thaliana (Mouse-ear cress).